A 193-amino-acid polypeptide reads, in one-letter code: Ribosome hibernation promotion factor (193 aa).

It belongs to the HPF/YfiA ribosome-associated protein family. Long HPF subfamily. In terms of assembly, interacts with 100S ribosomes.

The protein localises to the cytoplasm. Its function is as follows. Might modulate either transcription and/or translation. Required for dimerization of active 70S ribosomes into 100S ribosomes in stationary phase; 100S ribosomes are translationally inactive and sometimes present during exponential growth. The chain is Ribosome hibernation promotion factor from Picosynechococcus sp. (strain ATCC 27264 / PCC 7002 / PR-6) (Agmenellum quadruplicatum).